Reading from the N-terminus, the 711-residue chain is Protein Smaug homolog 1 (711 aa).

Phosphoserine is present on Ser168. A disordered region spans residues 278-323; sequence ARGPQCLPSDHAPLSPQSSVASSGSGGSEHLEDQTTARNTFQEEGS. The SAM domain maps to 323 to 396; sequence SGMKDVPAWL…LKSLERDIIE (74 aa). Ser420 bears the Phosphoserine mark. Disordered regions lie at residues 422–448 and 565–588; these read STTP…SAAA and NRGF…GRRN. Thr424 is modified (phosphothreonine). At Arg566 the chain carries Omega-N-methylarginine. The segment covering 568 to 581 has biased composition (polar residues); the sequence is FGQSNSLPTASSVG. Position 573 is a phosphoserine (Ser573).

Belongs to the SMAUG family. As to expression, expressed in brain (at protein level).

The protein resides in the cytoplasm. It is found in the cell projection. It localises to the dendrite. Its subcellular location is the synapse. The protein localises to the synaptosome. Functionally, acts as a translational repressor of SRE-containing messengers. This chain is Protein Smaug homolog 1 (Samd4a), found in Mus musculus (Mouse).